The primary structure comprises 129 residues: Small ribosomal subunit protein uS11 (129 aa).

The protein belongs to the universal ribosomal protein uS11 family. Part of the 30S ribosomal subunit. Interacts with proteins S7 and S18. Binds to IF-3.

Functionally, located on the platform of the 30S subunit, it bridges several disparate RNA helices of the 16S rRNA. Forms part of the Shine-Dalgarno cleft in the 70S ribosome. This chain is Small ribosomal subunit protein uS11, found in Vibrio atlanticus (strain LGP32) (Vibrio splendidus (strain Mel32)).